A 420-amino-acid polypeptide reads, in one-letter code: Dynein axonemal assembly factor 4 (420 aa).

Positions 3–87 (LQVSDYSWQQ…KEAAMWETLS (85 aa)) constitute a CS domain. The segment at 7–103 (DYSWQQTKTA…ETMQRIREKS (97 aa)) is mediates interaction with ESR1 and STUB1. 3 TPR repeats span residues 290 to 323 (PEWL…NNKM), 324 to 357 (PLLY…LMPP), and 366 to 399 (MKAH…DPSN).

As to quaternary structure, interacts with ZMYND10. Interacts with STUB1. Interacts with ESR1 and ESR2. Interacts with DNAAF2. Interacts with CCT3, CCT4, CCT5 and CCT8. Interacts with DNAAF6/PIH1D3.

The protein localises to the nucleus. Its subcellular location is the cytoplasm. The protein resides in the cell projection. It is found in the neuron projection. It localises to the dynein axonemal particle. Functionally, involved in neuronal migration during development of the cerebral neocortex. May regulate the stability and proteasomal degradation of the estrogen receptors that play an important role in neuronal differentiation, survival and plasticity. Axonemal dynein assembly factor required for ciliary motility. This Pongo pygmaeus (Bornean orangutan) protein is Dynein axonemal assembly factor 4.